The chain runs to 241 residues: Methylthioribulose-1-phosphate dehydratase (241 aa).

Cys96 provides a ligand contact to substrate. His114 and His116 together coordinate Zn(2+). Glu138 functions as the Proton donor/acceptor in the catalytic mechanism. His194 is a Zn(2+) binding site.

The protein belongs to the aldolase class II family. MtnB subfamily. The cofactor is Zn(2+).

It is found in the cytoplasm. It catalyses the reaction 5-(methylsulfanyl)-D-ribulose 1-phosphate = 5-methylsulfanyl-2,3-dioxopentyl phosphate + H2O. It participates in amino-acid biosynthesis; L-methionine biosynthesis via salvage pathway; L-methionine from S-methyl-5-thio-alpha-D-ribose 1-phosphate: step 2/6. Its function is as follows. Catalyzes the dehydration of methylthioribulose-1-phosphate (MTRu-1-P) into 2,3-diketo-5-methylthiopentyl-1-phosphate (DK-MTP-1-P). Functions in the methionine salvage pathway. May play a role in apoptosis. The sequence is that of Methylthioribulose-1-phosphate dehydratase from Danio rerio (Zebrafish).